The following is a 484-amino-acid chain: Cysteine--tRNA ligase (484 aa).

Zn(2+) is bound at residue cysteine 29. A 'HIGH' region motif is present at residues 31-41 (ATVQGMPHVGH). Residues cysteine 227, histidine 252, and glutamate 256 each contribute to the Zn(2+) site. The 'KMSKS' region signature appears at 283–287 (KMSKS). Position 286 (lysine 286) interacts with ATP.

It belongs to the class-I aminoacyl-tRNA synthetase family. In terms of assembly, monomer. It depends on Zn(2+) as a cofactor.

It is found in the cytoplasm. The catalysed reaction is tRNA(Cys) + L-cysteine + ATP = L-cysteinyl-tRNA(Cys) + AMP + diphosphate. The protein is Cysteine--tRNA ligase of Paenarthrobacter aurescens (strain TC1).